The sequence spans 111 residues: Large ribosomal subunit protein uL22 (111 aa).

Belongs to the universal ribosomal protein uL22 family. Part of the 50S ribosomal subunit.

Its function is as follows. This protein binds specifically to 23S rRNA; its binding is stimulated by other ribosomal proteins, e.g. L4, L17, and L20. It is important during the early stages of 50S assembly. It makes multiple contacts with different domains of the 23S rRNA in the assembled 50S subunit and ribosome. The globular domain of the protein is located near the polypeptide exit tunnel on the outside of the subunit, while an extended beta-hairpin is found that lines the wall of the exit tunnel in the center of the 70S ribosome. This chain is Large ribosomal subunit protein uL22, found in Acidithiobacillus ferrooxidans (strain ATCC 23270 / DSM 14882 / CIP 104768 / NCIMB 8455) (Ferrobacillus ferrooxidans (strain ATCC 23270)).